The sequence spans 190 residues: dCTP deaminase, dUMP-forming (190 aa).

DCTP-binding positions include 101–106 (KSSLGR), aspartate 119, 127–129 (TLE), glutamine 148, tyrosine 162, and glutamine 174. The active-site Proton donor/acceptor is glutamate 129. A disordered region spans residues 161–190 (PYGSSGVGSKYQGQRGPTPSRSYQNFIRST). The span at 171–190 (YQGQRGPTPSRSYQNFIRST) shows a compositional bias: polar residues.

Belongs to the dCTP deaminase family. Homotrimer.

It carries out the reaction dCTP + 2 H2O = dUMP + NH4(+) + diphosphate. It participates in pyrimidine metabolism; dUMP biosynthesis; dUMP from dCTP: step 1/1. Functionally, bifunctional enzyme that catalyzes both the deamination of dCTP to dUTP and the hydrolysis of dUTP to dUMP without releasing the toxic dUTP intermediate. This chain is dCTP deaminase, dUMP-forming, found in Mycobacterium marinum (strain ATCC BAA-535 / M).